The sequence spans 590 residues: Aspartate--tRNA(Asp/Asn) ligase (590 aa).

Residue glutamate 176 coordinates L-aspartate. The tract at residues 200–203 (QLFK) is aspartate. 2 residues coordinate L-aspartate: arginine 222 and histidine 451. Residue 222–224 (RDE) coordinates ATP. ATP is bound at residue glutamate 485. Residue arginine 492 coordinates L-aspartate. An ATP-binding site is contributed by 537 to 540 (GIDR).

This sequence belongs to the class-II aminoacyl-tRNA synthetase family. Type 1 subfamily. As to quaternary structure, homodimer.

It localises to the cytoplasm. It catalyses the reaction tRNA(Asx) + L-aspartate + ATP = L-aspartyl-tRNA(Asx) + AMP + diphosphate. Functionally, aspartyl-tRNA synthetase with relaxed tRNA specificity since it is able to aspartylate not only its cognate tRNA(Asp) but also tRNA(Asn). Reaction proceeds in two steps: L-aspartate is first activated by ATP to form Asp-AMP and then transferred to the acceptor end of tRNA(Asp/Asn). The sequence is that of Aspartate--tRNA(Asp/Asn) ligase from Ehrlichia chaffeensis (strain ATCC CRL-10679 / Arkansas).